The primary structure comprises 30 residues: Kalata-B16 (30 aa).

A cross-link (cyclopeptide (Gly-Asp)) is located at residues 1–30; sequence GIPCAESCVYIPCTITALLGCKCQDKVCYD. 3 cysteine pairs are disulfide-bonded: C4–C21, C8–C23, and C13–C28.

Post-translationally, this is a cyclic peptide.

In terms of biological role, probably participates in a plant defense mechanism. This is Kalata-B16 from Oldenlandia affinis.